Reading from the N-terminus, the 199-residue chain is Dephospho-CoA kinase (199 aa).

The DPCK domain maps to valine 4–serine 199. Alanine 12 to threonine 17 contacts ATP.

It belongs to the CoaE family.

The protein resides in the cytoplasm. The catalysed reaction is 3'-dephospho-CoA + ATP = ADP + CoA + H(+). It functions in the pathway cofactor biosynthesis; coenzyme A biosynthesis; CoA from (R)-pantothenate: step 5/5. In terms of biological role, catalyzes the phosphorylation of the 3'-hydroxyl group of dephosphocoenzyme A to form coenzyme A. The chain is Dephospho-CoA kinase from Oceanobacillus iheyensis (strain DSM 14371 / CIP 107618 / JCM 11309 / KCTC 3954 / HTE831).